The primary structure comprises 598 residues: Elongation factor 4 (598 aa).

The tr-type G domain maps to 2-183; sequence KKIRNFCIIA…AIIEKIPPPK (182 aa). GTP-binding positions include 14–19 and 130–133; these read DHGKST and NKVD.

It belongs to the TRAFAC class translation factor GTPase superfamily. Classic translation factor GTPase family. LepA subfamily.

It localises to the cell inner membrane. The catalysed reaction is GTP + H2O = GDP + phosphate + H(+). Required for accurate and efficient protein synthesis under certain stress conditions. May act as a fidelity factor of the translation reaction, by catalyzing a one-codon backward translocation of tRNAs on improperly translocated ribosomes. Back-translocation proceeds from a post-translocation (POST) complex to a pre-translocation (PRE) complex, thus giving elongation factor G a second chance to translocate the tRNAs correctly. Binds to ribosomes in a GTP-dependent manner. This is Elongation factor 4 from Flavobacterium johnsoniae (strain ATCC 17061 / DSM 2064 / JCM 8514 / BCRC 14874 / CCUG 350202 / NBRC 14942 / NCIMB 11054 / UW101) (Cytophaga johnsonae).